Reading from the N-terminus, the 222-residue chain is UPF0173 metal-dependent hydrolase Nther_2337 (222 aa).

It belongs to the UPF0173 family.

The chain is UPF0173 metal-dependent hydrolase Nther_2337 from Natranaerobius thermophilus (strain ATCC BAA-1301 / DSM 18059 / JW/NM-WN-LF).